We begin with the raw amino-acid sequence, 114 residues long: Probable acid stress chaperone HdeA (114 aa).

An N-terminal signal peptide occupies residues 1–26 (MIKTLFNKNTALAAVAILALSGSAMA). A disulfide bridge connects residues Cys-46 and Cys-94.

This sequence belongs to the HdeA family.

It is found in the periplasm. Required for optimal acid stress protection. Exhibits a chaperone-like activity only at low pH by suppressing non-specifically the aggregation of denaturated periplasmic proteins. This Brucella ovis (strain ATCC 25840 / 63/290 / NCTC 10512) protein is Probable acid stress chaperone HdeA.